Reading from the N-terminus, the 96-residue chain is UPF0251 protein Ssed_3913 (96 aa).

The protein belongs to the UPF0251 family.

The protein is UPF0251 protein Ssed_3913 of Shewanella sediminis (strain HAW-EB3).